A 265-amino-acid chain; its full sequence is MKIGFFDSGIGGMTVLYEAIKVLPYEDYIFYADTLNVPYGEKSKGKVKEYIFNAAEFLASQNIKALVIACNTATSIAIEDLRRNFDFPIIGIEPAVKPAINKCTEERKRVLVVATNLTLKEEKFHNLVKEIDHHDLVDCLALPGLVEFAENFDFSEDKIIKYLKNELSSFDLKQYGTIVLGCTHFPFFKNSFEKLFGIKVDMISGSVGTAKQLKKVLADRNQLGKGSGSITFFNSGHKIVDQEVISKYKRLFEILDETQRSHVGH.

Residues 7–8 (DS) and 39–40 (YG) contribute to the substrate site. Catalysis depends on cysteine 70, which acts as the Proton donor/acceptor. 71–72 (NT) contributes to the substrate binding site. The Proton donor/acceptor role is filled by cysteine 182. 183–184 (TH) contributes to the substrate binding site.

Belongs to the aspartate/glutamate racemases family.

It carries out the reaction L-glutamate = D-glutamate. It functions in the pathway cell wall biogenesis; peptidoglycan biosynthesis. In terms of biological role, provides the (R)-glutamate required for cell wall biosynthesis. This Bacillus subtilis (strain 168) protein is Glutamate racemase 2 (yrpC).